The chain runs to 79 residues: Acyl carrier protein (79 aa).

The region spanning 2–77 is the Carrier domain; the sequence is SSIEDRVKKI…QAVDYIKKHL (76 aa). An O-(pantetheine 4'-phosphoryl)serine modification is found at Ser-37.

The protein belongs to the acyl carrier protein (ACP) family. Post-translationally, 4'-phosphopantetheine is transferred from CoA to a specific serine of apo-ACP by AcpS. This modification is essential for activity because fatty acids are bound in thioester linkage to the sulfhydryl of the prosthetic group.

The protein localises to the cytoplasm. Its pathway is lipid metabolism; fatty acid biosynthesis. Carrier of the growing fatty acid chain in fatty acid biosynthesis. This chain is Acyl carrier protein, found in Halorhodospira halophila (strain DSM 244 / SL1) (Ectothiorhodospira halophila (strain DSM 244 / SL1)).